The following is a 339-amino-acid chain: UDP-N-acetylglucosamine--N-acetylmuramyl-(pentapeptide) pyrophosphoryl-undecaprenol N-acetylglucosamine transferase (339 aa).

Residues threonine 11–glycine 13, asparagine 127, arginine 170, serine 188, isoleucine 235, and glutamine 280 contribute to the UDP-N-acetyl-alpha-D-glucosamine site.

The protein belongs to the glycosyltransferase 28 family. MurG subfamily.

The protein localises to the cell inner membrane. The enzyme catalyses di-trans,octa-cis-undecaprenyl diphospho-N-acetyl-alpha-D-muramoyl-L-alanyl-D-glutamyl-meso-2,6-diaminopimeloyl-D-alanyl-D-alanine + UDP-N-acetyl-alpha-D-glucosamine = di-trans,octa-cis-undecaprenyl diphospho-[N-acetyl-alpha-D-glucosaminyl-(1-&gt;4)]-N-acetyl-alpha-D-muramoyl-L-alanyl-D-glutamyl-meso-2,6-diaminopimeloyl-D-alanyl-D-alanine + UDP + H(+). Its pathway is cell wall biogenesis; peptidoglycan biosynthesis. Functionally, cell wall formation. Catalyzes the transfer of a GlcNAc subunit on undecaprenyl-pyrophosphoryl-MurNAc-pentapeptide (lipid intermediate I) to form undecaprenyl-pyrophosphoryl-MurNAc-(pentapeptide)GlcNAc (lipid intermediate II). The protein is UDP-N-acetylglucosamine--N-acetylmuramyl-(pentapeptide) pyrophosphoryl-undecaprenol N-acetylglucosamine transferase of Thermotoga sp. (strain RQ2).